The following is a 406-amino-acid chain: Argininosuccinate synthase (406 aa).

ATP is bound by residues 11 to 19 and Ala-38; that span reads AYSGGLDTS. 2 residues coordinate L-citrulline: Tyr-91 and Ser-96. Gly-121 is an ATP binding site. L-aspartate-binding residues include Thr-123, Asn-127, and Asp-128. Asn-127 provides a ligand contact to L-citrulline. L-citrulline-binding residues include Arg-131, Ser-181, Ser-190, Glu-266, and Tyr-278.

The protein belongs to the argininosuccinate synthase family. Type 1 subfamily. As to quaternary structure, homotetramer.

Its subcellular location is the cytoplasm. The catalysed reaction is L-citrulline + L-aspartate + ATP = 2-(N(omega)-L-arginino)succinate + AMP + diphosphate + H(+). It participates in amino-acid biosynthesis; L-arginine biosynthesis; L-arginine from L-ornithine and carbamoyl phosphate: step 2/3. This is Argininosuccinate synthase from Campylobacter jejuni (strain RM1221).